A 1095-amino-acid polypeptide reads, in one-letter code: Putative patatin-like phospholipase domain-containing protein M110.7 (1095 aa).

A helical membrane pass occupies residues 9-29 (LLLIFENILELCMCITLVILI). Positions 75 to 113 (HKKRSSKEEMTPDKKRDSSEKISKQPPRELFEPNEQEQV) are disordered. A compositionally biased stretch (basic and acidic residues) spans 80–105 (SKEEMTPDKKRDSSEKISKQPPRELF). Residues 144-237 (VETL…LTSF), 327-416 (RKYE…IQFL), and 450-509 (IETG…TVMA) contribute to the a nucleoside 3',5'-cyclic phosphate site. The 168-residue stretch at 768-935 (IVFGGGGARG…VNNLPADIMR (168 aa)) folds into the PNPLA domain. Residues 772 to 777 (GGGARG) carry the GXGXXG motif. The GXSXG signature appears at 799 to 803 (GTSIG). Serine 801 serves as the catalytic Nucleophile. Residue aspartate 922 is the Proton acceptor of the active site. The DGA/G motif lies at 922-924 (DGA).

The protein belongs to the NTE family.

It is found in the membrane. The polypeptide is Putative patatin-like phospholipase domain-containing protein M110.7 (Caenorhabditis elegans).